A 103-amino-acid polypeptide reads, in one-letter code: Small ribosomal subunit protein uS10 (103 aa).

The protein belongs to the universal ribosomal protein uS10 family. As to quaternary structure, part of the 30S ribosomal subunit.

Functionally, involved in the binding of tRNA to the ribosomes. The protein is Small ribosomal subunit protein uS10 of Tolumonas auensis (strain DSM 9187 / NBRC 110442 / TA 4).